A 306-amino-acid chain; its full sequence is Lipoyl synthase 2 (306 aa).

Residues Cys49, Cys54, Cys60, Cys75, Cys79, Cys82, and Ser300 each contribute to the [4Fe-4S] cluster site. The Radical SAM core domain occupies Tyr61 to Ala289.

It belongs to the radical SAM superfamily. Lipoyl synthase family. It depends on [4Fe-4S] cluster as a cofactor.

It is found in the cytoplasm. It carries out the reaction [[Fe-S] cluster scaffold protein carrying a second [4Fe-4S](2+) cluster] + N(6)-octanoyl-L-lysyl-[protein] + 2 oxidized [2Fe-2S]-[ferredoxin] + 2 S-adenosyl-L-methionine + 4 H(+) = [[Fe-S] cluster scaffold protein] + N(6)-[(R)-dihydrolipoyl]-L-lysyl-[protein] + 4 Fe(3+) + 2 hydrogen sulfide + 2 5'-deoxyadenosine + 2 L-methionine + 2 reduced [2Fe-2S]-[ferredoxin]. It functions in the pathway protein modification; protein lipoylation via endogenous pathway; protein N(6)-(lipoyl)lysine from octanoyl-[acyl-carrier-protein]: step 2/2. Functionally, catalyzes the radical-mediated insertion of two sulfur atoms into the C-6 and C-8 positions of the octanoyl moiety bound to the lipoyl domains of lipoate-dependent enzymes, thereby converting the octanoylated domains into lipoylated derivatives. This Prochlorococcus marinus (strain MIT 9313) protein is Lipoyl synthase 2.